A 1035-amino-acid chain; its full sequence is Eukaryotic translation initiation factor 3 subunit A (1035 aa).

Positions 92 to 121 (LKKFIELAEKKVTEAQAKADEIQSSLESAA) form a coiled coil. Positions 339 to 523 (MTKAASFVLL…GVLTFDTDVF (185 aa)) constitute a PCI domain. A coiled-coil region spans residues 606 to 910 (ERRVIIEKKK…LRAKRAGLSE (305 aa)). Composition is skewed to basic and acidic residues over residues 619–632 (TDALQRKQKEEETR) and 809–901 (KAAE…EARL). 2 disordered regions span residues 619–649 (TDALQRKQKEEETRKRIRTQQLQEAEKQRLA) and 809–1035 (KAAE…QQNQ). 2 stretches are compositionally biased toward low complexity: residues 943–953 (KEAAGGAAPEA) and 988–1004 (PPSQRSSQPPSRTQTPP).

The protein belongs to the eIF-3 subunit A family. In terms of assembly, component of the eukaryotic translation initiation factor 3 (eIF-3) complex.

Its subcellular location is the cytoplasm. In terms of biological role, RNA-binding component of the eukaryotic translation initiation factor 3 (eIF-3) complex, which is involved in protein synthesis of a specialized repertoire of mRNAs and, together with other initiation factors, stimulates binding of mRNA and methionyl-tRNAi to the 40S ribosome. The eIF-3 complex specifically targets and initiates translation of a subset of mRNAs involved in cell proliferation. The chain is Eukaryotic translation initiation factor 3 subunit A (tif32) from Emericella nidulans (strain FGSC A4 / ATCC 38163 / CBS 112.46 / NRRL 194 / M139) (Aspergillus nidulans).